The chain runs to 236 residues: tRNA (guanine-N(7)-)-methyltransferase (236 aa).

S-adenosyl-L-methionine contacts are provided by Glu68, Glu93, Asp120, and Asp143. Residue Asp143 is part of the active site. Residues Lys147, Asp179, and Thr212–Glu215 each bind substrate.

This sequence belongs to the class I-like SAM-binding methyltransferase superfamily. TrmB family.

It carries out the reaction guanosine(46) in tRNA + S-adenosyl-L-methionine = N(7)-methylguanosine(46) in tRNA + S-adenosyl-L-homocysteine. It functions in the pathway tRNA modification; N(7)-methylguanine-tRNA biosynthesis. Catalyzes the formation of N(7)-methylguanine at position 46 (m7G46) in tRNA. The chain is tRNA (guanine-N(7)-)-methyltransferase from Nitrosococcus oceani (strain ATCC 19707 / BCRC 17464 / JCM 30415 / NCIMB 11848 / C-107).